We begin with the raw amino-acid sequence, 689 residues long: Glycine--tRNA ligase beta subunit (689 aa).

The protein belongs to the class-II aminoacyl-tRNA synthetase family. As to quaternary structure, tetramer of two alpha and two beta subunits.

It localises to the cytoplasm. It catalyses the reaction tRNA(Gly) + glycine + ATP = glycyl-tRNA(Gly) + AMP + diphosphate. The protein is Glycine--tRNA ligase beta subunit of Shewanella baltica (strain OS223).